A 395-amino-acid polypeptide reads, in one-letter code: Elongation factor Ts, mitochondrial (395 aa).

The N-terminal 63 residues, 1–63, are a transit peptide targeting the mitochondrion; it reads MAFARAVRRP…RGFGNFIRSF (63 aa).

This sequence belongs to the EF-Ts family.

The protein localises to the mitochondrion. Its function is as follows. Associates with the EF-Tu.GDP complex and induces the exchange of GDP to GTP. It remains bound to the aminoacyl-tRNA.EF-Tu.GTP complex up to the GTP hydrolysis stage on the ribosome. The polypeptide is Elongation factor Ts, mitochondrial (Arabidopsis thaliana (Mouse-ear cress)).